The sequence spans 233 residues: Orotidine 5'-phosphate decarboxylase (233 aa).

Residues Asp11, Lys34, 61 to 70 (DLKLHDIPNT), Thr117, Arg179, Gln189, Gly209, and Arg210 contribute to the substrate site. The Proton donor role is filled by Lys63.

Belongs to the OMP decarboxylase family. Type 1 subfamily. Homodimer.

It carries out the reaction orotidine 5'-phosphate + H(+) = UMP + CO2. Its pathway is pyrimidine metabolism; UMP biosynthesis via de novo pathway; UMP from orotate: step 2/2. Catalyzes the decarboxylation of orotidine 5'-monophosphate (OMP) to uridine 5'-monophosphate (UMP). This chain is Orotidine 5'-phosphate decarboxylase, found in Streptococcus agalactiae serotype Ia (strain ATCC 27591 / A909 / CDC SS700).